The primary structure comprises 400 residues: Acetate kinase (400 aa).

Asn10 is a binding site for Mg(2+). Lys17 is an ATP binding site. Arg89 serves as a coordination point for substrate. Asp148 serves as the catalytic Proton donor/acceptor. Residues 208 to 212, 283 to 285, and 331 to 335 contribute to the ATP site; these read HLGNG, DCR, and GIGEN. Glu385 contributes to the Mg(2+) binding site.

It belongs to the acetokinase family. In terms of assembly, homodimer. The cofactor is Mg(2+). Requires Mn(2+) as cofactor.

The protein resides in the cytoplasm. The catalysed reaction is acetate + ATP = acetyl phosphate + ADP. Its pathway is metabolic intermediate biosynthesis; acetyl-CoA biosynthesis; acetyl-CoA from acetate: step 1/2. Functionally, catalyzes the formation of acetyl phosphate from acetate and ATP. Can also catalyze the reverse reaction. In Haemophilus ducreyi (strain 35000HP / ATCC 700724), this protein is Acetate kinase.